Consider the following 346-residue polypeptide: Peripherin-2 (346 aa).

Topologically, residues 1 to 24 (MALMKTKFNLKRRVKLAQGLWLMN) are cytoplasmic. The chain crosses the membrane as a helical span at residues 25 to 43 (WCCVLAGIALFSMGVFLKI). Residues 44 to 61 (ELRKRSEVMDNDESHFVP) lie on the Lumenal side of the membrane. The helical transmembrane segment at 62–80 (NSLILMGSLACALNAFPGK) threads the bilayer. The Cytoplasmic segment spans residues 81 to 99 (ICYDSLDPTKFPRWKPMLK). A helical transmembrane segment spans residues 100–123 (PYLIICLIFNIFIFFTGVVCFLTR). Topologically, residues 124–264 (GSLESTLAHG…LNYYTSMMSS (141 aa)) are lumenal. N229 carries an N-linked (GlcNAc...) asparagine glycan. The chain crosses the membrane as a helical span at residues 265-290 (MGGMVFLVWIMEMAVMIGLRFLHTCL). Over 291 to 346 (ETIANPEDPECESEGWILEKSLKDTIKSSWELVKSMGKLNKVETAGGEEAGVATVS) the chain is Cytoplasmic.

This sequence belongs to the PRPH2/ROM1 family. In terms of assembly, homodimer; disulfide-linked. Found in both rod and cone photoreceptors. Specifically in the rims and incisures of rod and cone outer segment disks.

Its subcellular location is the membrane. Functionally, may be involved in the morphogenesis of retina outer segment disks and the development and maintenance of the retina ultrastructure. The chain is Peripherin-2 (prph2) from Xenopus laevis (African clawed frog).